Consider the following 645-residue polypeptide: 1,4-alpha-glucan branching enzyme GlgB (645 aa).

Residue Asp-309 is the Nucleophile of the active site. Glu-352 functions as the Proton donor in the catalytic mechanism. A disordered region spans residues 619–645 (VKTRKGSKKQDGSKTKVRSNVTSRGKR). Polar residues predominate over residues 636–645 (RSNVTSRGKR).

Belongs to the glycosyl hydrolase 13 family. GlgB subfamily. In terms of assembly, monomer.

It catalyses the reaction Transfers a segment of a (1-&gt;4)-alpha-D-glucan chain to a primary hydroxy group in a similar glucan chain.. The protein operates within glycan biosynthesis; glycogen biosynthesis. In terms of biological role, catalyzes the formation of the alpha-1,6-glucosidic linkages in glycogen by scission of a 1,4-alpha-linked oligosaccharide from growing alpha-1,4-glucan chains and the subsequent attachment of the oligosaccharide to the alpha-1,6 position. This chain is 1,4-alpha-glucan branching enzyme GlgB, found in Bacillus cereus (strain AH820).